The chain runs to 291 residues: 3-hydroxy-5-phosphonooxypentane-2,4-dione thiolase (291 aa).

Residue K203 is the Schiff-base intermediate with substrate of the active site.

This sequence belongs to the DeoC/FbaB aldolase family. As to quaternary structure, homodecamer.

It is found in the cytoplasm. The catalysed reaction is dihydroxyacetone phosphate + acetyl-CoA = 3-hydroxy-2,4-dioxopentyl phosphate + CoA. Involved in the degradation of phospho-AI-2, thereby terminating induction of the lsr operon and closing the AI-2 signaling cycle. Catalyzes the transfer of an acetyl moiety from 3-hydroxy-5-phosphonooxypentane-2,4-dione to CoA to form glycerone phosphate and acetyl-CoA. In Photorhabdus laumondii subsp. laumondii (strain DSM 15139 / CIP 105565 / TT01) (Photorhabdus luminescens subsp. laumondii), this protein is 3-hydroxy-5-phosphonooxypentane-2,4-dione thiolase.